We begin with the raw amino-acid sequence, 159 residues long: Small ribosomal subunit protein uS7 (159 aa).

The protein belongs to the universal ribosomal protein uS7 family. In terms of assembly, part of the 30S ribosomal subunit. Contacts proteins S9 and S11.

Its function is as follows. One of the primary rRNA binding proteins, it binds directly to 16S rRNA where it nucleates assembly of the head domain of the 30S subunit. Is located at the subunit interface close to the decoding center, probably blocks exit of the E-site tRNA. This Sulfurihydrogenibium sp. (strain YO3AOP1) protein is Small ribosomal subunit protein uS7.